A 2227-amino-acid polypeptide reads, in one-letter code: Genome polyprotein (2227 aa).

2 short sequence motifs ((L)YPX(n)L motif) span residues 167–171 (YPHGL) and 200–205 (YPVWEL). The tract at residues 766–836 (MMSRIAAGDL…PRKKKGLFSQ (71 aa)) is involved in P1-2A pentamerization. A helical transmembrane segment spans residues 1010–1030 (VTVEIINTVLCFVKSGILLYV). The tract at residues 1043-1070 (IGLLRVMNYVDIGCSVISCGKVFSKMLE) is membrane-penetrating ability. Positions 1127–1152 (KKKDILNILKDNQQKIEKAIEEADKF) form a coiled coil. The region spanning 1204-1366 (HQKLKNLGSI…SFSKNPHNDM (163 aa)) is the SF3 helicase domain. 1230 to 1237 (GKRGGGKS) provides a ligand contact to ATP. The helical transmembrane segment at 1462 to 1482 (WVAVGAAVGILGVLVGGWFVY) threads the bilayer. Tyr1499 is subject to O-(5'-phospho-RNA)-tyrosine. The region spanning 1514–1728 (DPVESQSTLE…VAKLVTQEMF (215 aa)) is the Peptidase C3 domain. Active-site for protease 3C activity residues include His1563, Asp1603, and Cys1691. Residues 1976-2097 (DVGLDLDFSA…VFSRDVQIDN (122 aa)) form the RdRp catalytic domain.

Belongs to the picornaviridae polyprotein family. In terms of assembly, homodimer. Homomultimer; probably interacts with membranes in a multimeric form. Seems to assemble into amyloid-like fibers. As to quaternary structure, homodimer. Monomer. Interacts with protein 3CD. Interacts with host ACBD3. In terms of assembly, interacts with protein 3AB. As to quaternary structure, interacts with human MAVS. Homodimer; disulfide-linked. In terms of assembly, homopentamer. Homooligomer. As to quaternary structure, interacts with capsid protein VP2. Interacts with capsid protein VP3. Interacts with capsid protein VP1. Interacts with capsid protein VP3. In terms of assembly, interacts with capsid protein VP1. Interacts with capsid protein VP2. Specific enzymatic cleavages by viral protease in vivo yield a variety of precursors and mature proteins. Polyprotein processing intermediates are produced, such as P1-2A which is a functional precursor of the structural proteins, VP0 which is a VP4-VP2 precursor, VP1-2A precursor, 3ABC precursor which is a stable and catalytically active precursor of 3A, 3B and 3C proteins, 3AB and 3CD precursors. The assembly signal 2A is removed from VP1-2A by a host protease, possibly host Cathepsin L. This cleavage occurs over a region of 3 amino-acids probably generating VP1 proteins with heterogeneous C-termini. In terms of processing, during virion maturation, immature virions are rendered infectious following cleavage of VP0 into VP4 and VP2. This maturation seems to be an autocatalytic event triggered by the presence of RNA in the capsid and is followed by a conformational change of the particle. Post-translationally, the assembly signal 2A is removed from VP1-2A by a host protease, possibly host Cathepsin L in naked virions. This cleavage does not occur in enveloped virions. This cleavage occurs over a region of 3 amino-acids probably generating VP1 proteins with heterogeneous C-termini. VPg is uridylylated prior to priming replication into VPg-pUpU. In terms of processing, unlike other picornaviruses, does not seem to be myristoylated.

It localises to the virion. Its subcellular location is the host endosome. The protein resides in the host multivesicular body. It is found in the host membrane. The protein localises to the host mitochondrion outer membrane. It localises to the host cytoplasm. Its subcellular location is the host cytoplasmic vesicle membrane. The catalysed reaction is RNA(n) + a ribonucleoside 5'-triphosphate = RNA(n+1) + diphosphate. The enzyme catalyses a ribonucleoside 5'-triphosphate + H2O = a ribonucleoside 5'-diphosphate + phosphate + H(+). It catalyses the reaction Selective cleavage of Gln-|-Gly bond in the poliovirus polyprotein. In other picornavirus reactions Glu may be substituted for Gln, and Ser or Thr for Gly.. In terms of biological role, capsid proteins VP1, VP2, and VP3 form a closed capsid enclosing the viral positive strand RNA genome. All these proteins contain a beta-sheet structure called beta-barrel jelly roll. Together they form an icosahedral capsid (T=3) composed of 60 copies of each VP1, VP2, and VP3, with a diameter of approximately 300 Angstroms. VP1 is situated at the 12 fivefold axes, whereas VP2 and VP3 are located at the quasi-sixfold axes. The naked capsid interacts with the host receptor HAVCR1 to provide virion attachment to and probably entry into the target cell. Its function is as follows. VP0 precursor is a component of the immature procapsids. Plays a role in the assembly of the 12 pentamers into an icosahedral structure. Has not been detected in mature virions, supposedly owing to its small size. Functionally, precursor component of immature procapsids that corresponds to an extended form of the structural protein VP1. After maturation, possibly by the host Cathepsin L, the assembly signal 2A is cleaved to give rise to the mature VP1 protein. In terms of biological role, functions as a viroporin. Affects membrane integrity and causes an increase in membrane permeability. Involved in host intracellular membrane rearrangements probably to give rise to the viral factories. Does not disrupt calcium homeostasis or glycoprotein trafficking. Antagonizes the innate immune response of the host by suppressing IFN-beta synthesis, which it achieves by interfering with the RIG-I/IFIH1 pathway. Its function is as follows. Affects membrane integrity and causes an increase in membrane permeability. Associates with and induces structural rearrangements of intracellular membranes. Displays RNA-binding activity. Functionally, the precursor 3ABC is targeted to the mitochondrial membrane where protease 3C activity cleaves and inhibits the host antiviral protein MAVS, thereby disrupting activation of IRF3 through the IFIH1/MDA5 pathway. In vivo, the protease activity of 3ABC precursor is more efficient in cleaving the 2BC precursor than that of protein 3C. The 3ABC precursor may therefore play a role in the proteolytic processing of the polyprotein. Possible viroporin. In terms of biological role, interacts with the 3CD precursor and with RNA structures found at both the 5'- and 3'-termini of the viral genome. Since the 3AB precursor contains the hydrophobic domain 3A, it probably anchors the whole viral replicase complex to intracellular membranes on which viral RNA synthesis occurs. Its function is as follows. May serve as membrane anchor to the 3AB and 3ABC precursors via its hydrophobic domain. May interact with RNA. Acts as a primer for viral RNA replication and remains covalently bound to viral genomic RNA. VPg is uridylylated prior to priming replication into VPg-pUpU. The VPg-pUpU is then used as primer on the genomic RNA poly(A) by the RNA-dependent RNA polymerase to replicate the viral genome. Functionally, cysteine protease that generates mature viral proteins from the precursor polyprotein. In addition to its proteolytic activity, it binds to viral RNA, and thus influences viral genome replication. RNA and substrate bind cooperatively to the protease. Cleaves IKBKG/NEMO to impair innate immune signaling. Cleaves host PABPC1 which may participate in the switch of viral translation to RNA synthesis. In terms of biological role, interacts with the 3AB precursor and with RNA structures found at both the 5'- and 3'-termini of the viral genome. Disrupts TLR3 signaling by degrading the host adapter protein TICAM1/TRIF. Its function is as follows. Replicates genomic and antigenomic RNA by recognizing replications specific signals. In Cercopithecus hamlyni (Owl-faced monkey), this protein is Genome polyprotein.